Consider the following 400-residue polypeptide: Nicotinate phosphoribosyltransferase (400 aa).

His220 carries the post-translational modification Phosphohistidine; by autocatalysis.

It belongs to the NAPRTase family. Transiently phosphorylated on a His residue during the reaction cycle. Phosphorylation strongly increases the affinity for substrates and increases the rate of nicotinate D-ribonucleotide production. Dephosphorylation regenerates the low-affinity form of the enzyme, leading to product release.

It carries out the reaction nicotinate + 5-phospho-alpha-D-ribose 1-diphosphate + ATP + H2O = nicotinate beta-D-ribonucleotide + ADP + phosphate + diphosphate. It participates in cofactor biosynthesis; NAD(+) biosynthesis; nicotinate D-ribonucleotide from nicotinate: step 1/1. In terms of biological role, catalyzes the synthesis of beta-nicotinate D-ribonucleotide from nicotinate and 5-phospho-D-ribose 1-phosphate at the expense of ATP. In Salmonella typhimurium (strain LT2 / SGSC1412 / ATCC 700720), this protein is Nicotinate phosphoribosyltransferase.